Reading from the N-terminus, the 310-residue chain is Deoxyribonuclease gamma (310 aa).

The first 25 residues, 1–25 (MSLHPASPRLASLLLFILALHDTLA), serve as a signal peptide directing secretion. A Bipartite nuclear localization signal motif is present at residues 40 to 56 (KKENHEAMDIIVKIIKR). Catalysis depends on residues E105 and H160. The cysteines at positions 199 and 236 are disulfide-linked. The tract at residues 289 to 310 (SRAFTNNRKSVSLKKRKKGNRS) is not required for free DNA-nuclease activity but required for activity towards liposome-coated DNA. The Nuclear localization signal signature appears at 301–307 (LKKRKKG).

It belongs to the DNase I family. Requires Ca(2+) as cofactor. Mg(2+) serves as cofactor. Post-translationally, poly-ADP-ribosylated by PARP1. ADP-ribosylation negatively regulates enzymatic activity during apoptosis. Expressed at high levels in liver, spleen and testes. Expressed at lower levels in heart, lungs, skeletal muscle and kidney. Not expressed in brain. Predominantly expressed in macrophages; at protein level. Secreted by mononuclear phagocytes.

Its subcellular location is the nucleus. The protein resides in the endoplasmic reticulum. The protein localises to the secreted. Its activity is regulated as follows. Inhibited by zinc. Inhibited by heparin and proteolysis by plasmin. Its function is as follows. Has DNA hydrolytic activity. Is capable of both single- and double-stranded DNA cleavage, producing DNA fragments with 3'-OH ends. Can cleave chromatin to nucleosomal units and cleaves nucleosomal and liposome-coated DNA. Acts in internucleosomal DNA fragmentation (INDF) during apoptosis and necrosis. The role in apoptosis includes myogenic and neuronal differentiation, and BCR-mediated clonal deletion of self-reactive B cells. Is active on chromatin in apoptotic cell-derived membrane-coated microparticles and thus suppresses anti-DNA autoimmunity. Together with DNASE1, plays a key role in degrading neutrophil extracellular traps (NETs). NETs are mainly composed of DNA fibers and are released by neutrophils to bind pathogens during inflammation. Degradation of intravascular NETs by DNASE1 and DNASE1L3 is required to prevent formation of clots that obstruct blood vessels and cause organ damage following inflammation. This chain is Deoxyribonuclease gamma, found in Mus musculus (Mouse).